A 527-amino-acid chain; its full sequence is Ankyrin repeat domain-containing protein 42 (527 aa).

The disordered stretch occupies residues 1-27; sequence MPGVANPGPSKSRRETADSSSRKKVHF. Over residues 12–21 the composition is skewed to basic and acidic residues; the sequence is SRRETADSSS. 10 ANK repeats span residues 25 to 54, 59 to 88, 92 to 121, 125 to 154, 158 to 187, 191 to 220, 228 to 257, 263 to 293, 297 to 326, and 330 to 360; these read VHFS…NLNE, HQFT…DATQ, RGWT…NLAT, RGCT…DPSV, REWK…GIED, NGNL…SATQ, NGEN…EGSH, DLAF…NLNE, NGST…ESNI, and AGET…EIDD. Residues 395-484 adopt a coiled-coil conformation; it reads NARMRAHKKI…ETLQKIQVTS (90 aa).

In Mus musculus (Mouse), this protein is Ankyrin repeat domain-containing protein 42 (Ankrd42).